The sequence spans 405 residues: Phosphoglycerate kinase (405 aa).

Substrate contacts are provided by residues 24–26 (DFN), arginine 40, 63–66 (HLGR), arginine 122, and arginine 162. ATP contacts are provided by residues lysine 212, glutamate 331, and 361–364 (GGDS).

Belongs to the phosphoglycerate kinase family. In terms of assembly, monomer.

Its subcellular location is the cytoplasm. The catalysed reaction is (2R)-3-phosphoglycerate + ATP = (2R)-3-phospho-glyceroyl phosphate + ADP. Its pathway is carbohydrate degradation; glycolysis; pyruvate from D-glyceraldehyde 3-phosphate: step 2/5. This is Phosphoglycerate kinase (pgk) from Corynebacterium glutamicum (strain ATCC 13032 / DSM 20300 / JCM 1318 / BCRC 11384 / CCUG 27702 / LMG 3730 / NBRC 12168 / NCIMB 10025 / NRRL B-2784 / 534).